Here is a 74-residue protein sequence, read N- to C-terminus: Acyl carrier protein (74 aa).

The region spanning 1 to 73 (MAVFEKVQEI…DLVAYVEEQA (73 aa)) is the Carrier domain. An O-(pantetheine 4'-phosphoryl)serine modification is found at S35.

This sequence belongs to the acyl carrier protein (ACP) family. In terms of processing, 4'-phosphopantetheine is transferred from CoA to a specific serine of apo-ACP by AcpS. This modification is essential for activity because fatty acids are bound in thioester linkage to the sulfhydryl of the prosthetic group.

The protein resides in the cytoplasm. The protein operates within lipid metabolism; fatty acid biosynthesis. Carrier of the growing fatty acid chain in fatty acid biosynthesis. The polypeptide is Acyl carrier protein (Streptococcus pneumoniae serotype 4 (strain ATCC BAA-334 / TIGR4)).